The primary structure comprises 141 residues: uncharacterized protein (141 aa).

This is an uncharacterized protein from Borreliella burgdorferi (strain ATCC 35210 / DSM 4680 / CIP 102532 / B31) (Borrelia burgdorferi).